We begin with the raw amino-acid sequence, 602 residues long: Aspartate--tRNA(Asp/Asn) ligase (602 aa).

Glu-175 serves as a coordination point for L-aspartate. Residues 199–202 (QIFK) form an aspartate region. L-aspartate is bound at residue Arg-221. ATP is bound by residues 221–223 (RDE) and Gln-230. His-458 serves as a coordination point for L-aspartate. Residue Glu-492 coordinates ATP. Arg-499 lines the L-aspartate pocket. An ATP-binding site is contributed by 544–547 (GLDR).

The protein belongs to the class-II aminoacyl-tRNA synthetase family. Type 1 subfamily. As to quaternary structure, homodimer.

The protein resides in the cytoplasm. It carries out the reaction tRNA(Asx) + L-aspartate + ATP = L-aspartyl-tRNA(Asx) + AMP + diphosphate. Aspartyl-tRNA synthetase with relaxed tRNA specificity since it is able to aspartylate not only its cognate tRNA(Asp) but also tRNA(Asn). Reaction proceeds in two steps: L-aspartate is first activated by ATP to form Asp-AMP and then transferred to the acceptor end of tRNA(Asp/Asn). The chain is Aspartate--tRNA(Asp/Asn) ligase from Cupriavidus pinatubonensis (strain JMP 134 / LMG 1197) (Cupriavidus necator (strain JMP 134)).